The following is a 3412-amino-acid chain: Genome polyprotein (3412 aa).

The tract at residues 2 to 15 (SKKPGKPGRNRVVN) is interaction with host EXOC1. At 2 to 108 (SKKPGKPGRN…PSKKRGGTRS (107 aa)) the chain is on the cytoplasmic side. The tract at residues 37 to 72 (LLDGRGPVRFILAILTFFRFTALQPTEALKRRWRAV) is hydrophobic; homodimerization of capsid protein C. A propeptide spans 104 to 121 (GGTRSLLGLAALIGLASS) (ER anchor for the capsid protein C, removed in mature form by serine protease NS3). A helical membrane pass occupies residues 109–129 (LLGLAALIGLASSLQLSTYQG). The Extracellular portion of the chain corresponds to 130–247 (KVLMSINKTD…TTKYLTKVEN (118 aa)). An N-linked (GlcNAc...) asparagine; by host glycan is attached at asparagine 136. Residues 248-268 (WVLRNPGYALVALAIGWMLGS) traverse the membrane as a helical segment. The Cytoplasmic segment spans residues 269–273 (NNTQR). A helical transmembrane segment spans residues 274-288 (VVFVIMLMLIAPAYS). The Extracellular segment spans residues 289 to 741 (FNCLGTSNRD…QVFGGAFRTL (453 aa)). 8 disulfide bridges follow: cysteine 291–cysteine 318, cysteine 348–cysteine 404, cysteine 348–cysteine 409, cysteine 362–cysteine 393, cysteine 380–cysteine 404, cysteine 380–cysteine 409, cysteine 478–cysteine 576, and cysteine 593–cysteine 624. Positions 386-399 (DRGWGNGCGLFGKG) are fusion peptide. A helical membrane pass occupies residues 742-762 (FGGMSWITQGLLGALLLWMGL). Over 763-768 (QARDRS) the chain is Cytoplasmic. The helical transmembrane segment at 769–789 (ISLTLLAVGGILIFLATSVQA) threads the bilayer. Residues 790 to 1214 (DSGCAIDLQR…AFAEMNTGGD (425 aa)) lie on the Extracellular side of the membrane. Disulfide bonds link cysteine 793–cysteine 804 and cysteine 844–cysteine 932. N-linked (GlcNAc...) asparagine; by host glycans are attached at residues asparagine 919, asparagine 964, and asparagine 996. 6 disulfide bridges follow: cysteine 968–cysteine 1012, cysteine 1069–cysteine 1118, cysteine 1080–cysteine 1101, cysteine 1080–cysteine 1102, cysteine 1101–cysteine 1105, and cysteine 1102–cysteine 1105. A helical membrane pass occupies residues 1215–1235 (VIHLALVAVFKVQPAFLAGLF). Residues 1236 to 1245 (LRMQWSNQEN) are Cytoplasmic-facing. A helical membrane pass occupies residues 1246–1266 (ILMVIGAAFLQMAANDLKLEV). Over 1267–1288 (LPILNAMSIAWMLIRAMKEGKV) the chain is Lumenal. The chain crosses the membrane as a helical span at residues 1289–1303 (AMYALPILCALTPGM). Arginine 1304 is a topological domain (cytoplasmic). The helical transmembrane segment at 1305–1325 (MAGLDVIRCLLLIIGIVTLLN) threads the bilayer. At 1326–1339 (ERRESVAKKKGGYL) the chain is on the lumenal side. A helical membrane pass occupies residues 1340 to 1360 (LAAALCQAGVCSPLIMMGGLI). The Cytoplasmic segment spans residues 1361 to 1369 (LAHPNGKRS). The helical transmembrane segment at 1370 to 1390 (WPASEVLTGVGLMCALAGGLL) threads the bilayer. Residues 1391–1393 (EFE) are Lumenal-facing. Residues 1394–1414 (ETSMVVPFAIAGLMYITYTVS) form a helical membrane-spanning segment. The Cytoplasmic portion of the chain corresponds to 1415 to 1471 (GKAAEMWIEKAADITWEQNAEITGTSPRLDVDLDSHGNFKLLNDPGAPVHLFALRFI). Residues 1422–1461 (IEKAADITWEQNAEITGTSPRLDVDLDSHGNFKLLNDPGA) are interacts with and activates NS3 protease. The segment at residues 1472 to 1492 (LLGLSARFHWFIPFGVLGFWL) is an intramembrane region (helical). The Cytoplasmic portion of the chain corresponds to 1493 to 2167 (LGKHSKRGGA…KEALAELPDS (675 aa)). In terms of domain architecture, Peptidase S7 spans 1500-1677 (GGALWDVPSP…ERTEEPIPDA (178 aa)). Active-site charge relay system; for serine protease NS3 activity residues include histidine 1550, aspartate 1574, and serine 1634. The 157-residue stretch at 1680 to 1836 (EEMLRKRKLT…DSNSPILDVE (157 aa)) folds into the Helicase ATP-binding domain. The tract at residues 1684–1687 (RKRK) is important for RNA-binding. Position 1693–1700 (1693–1700 (LHPGAGKT)) interacts with ATP. The short motif at 1784-1787 (DEAH) is the DEAH box element. Positions 1847–2011 (GYEWITNFTG…GLVAQMYQPE (165 aa)) constitute a Helicase C-terminal domain. The regulates the ATPase activity of NS3 helicase stretch occupies residues 2162–2166 (AELPD). Residues 2168–2188 (LETLLLIGMLCVMSMGTFIFL) traverse the membrane as a helical segment. Residues 2189–2193 (MNRKG) lie on the Lumenal side of the membrane. The segment at residues 2194 to 2214 (VGKMGLGAFVMTLATALLWAA) is an intramembrane region (helical). Residue glutamate 2215 is a topological domain, lumenal. The helical transmembrane segment at 2216-2236 (VPGTQIAGVLLIVFLLMIVLI) threads the bilayer. Topologically, residues 2237–2251 (PEPEKQRSQTDNQLA) are cytoplasmic. A helical membrane pass occupies residues 2252 to 2266 (VFLICIMTLMGVVAA). At 2267 to 2308 (NEMGLLEKTKSDIAKLFGSQPGSVGFATRTTPWDISLDIKPA) the chain is on the lumenal side. An intramembrane region (helical) is located at residues 2309 to 2329 (TAWALYAAATMVMTPLIKHLI). The Lumenal portion of the chain corresponds to 2330-2376 (TTQYVNFSLTAIASQAGVLLGLTNGMPFTAMDLSVPLLVLGCWNQMT). The helical transmembrane segment at 2377–2397 (LPSLAVAVMLLAIHYAFMIPG) threads the bilayer. Residues 2398-2440 (WQAEAMRAAQRRTAAGIMKNAVVDGIVATDIPDLSPATPMTEK) lie on the Cytoplasmic side of the membrane. The chain crosses the membrane as a helical span at residues 2441-2461 (KMGQILLIAAAVLAVLVRPGI). The Lumenal portion of the chain corresponds to 2462–2466 (CSIKE). Residues 2467-2487 (FGVLGSAALVTLIEGTAGVVW) form a helical membrane-spanning segment. The Cytoplasmic segment spans residues 2488 to 3412 (NCTTAVGLCN…IGEEEYRDYM (925 aa)). An mRNA cap 0-1 NS5-type MT domain is found at 2525–2790 (GGGKGATLGE…DVNLGSGTRS (266 aa)). Residue serine 2580 coordinates S-adenosyl-L-methionine. Serine 2580 carries the post-translational modification Phosphoserine. Lysine 2585 serves as the catalytic For 2'-O-MTase activity. Positions 2610, 2611, 2628, 2629, 2655, and 2656 each coordinate S-adenosyl-L-methionine. Catalysis depends on aspartate 2670, which acts as the For 2'-O-MTase activity. Isoleucine 2671 provides a ligand contact to S-adenosyl-L-methionine. Catalysis depends on for 2'-O-MTase activity residues lysine 2706 and glutamate 2742. Tyrosine 2744 is an S-adenosyl-L-methionine binding site. Positions 2771-2780 (QNRSGPRYEE) are enriched in basic and acidic residues. A disordered region spans residues 2771–2791 (QNRSGPRYEEDVNLGSGTRSV). Residues glutamate 2964, histidine 2968, cysteine 2973, and cysteine 2976 each coordinate Zn(2+). Positions 3054–3206 (GKMYADDTAG…KPIDDRFATA (153 aa)) constitute a RdRp catalytic domain. Residues histidine 3241, cysteine 3257, and cysteine 3376 each coordinate Zn(2+).

It in the N-terminal section; belongs to the class I-like SAM-binding methyltransferase superfamily. mRNA cap 0-1 NS5-type methyltransferase family. Homodimer. Interacts (via N-terminus) with host EXOC1 (via C-terminus); this interaction results in EXOC1 degradation through the proteasome degradation pathway. As to quaternary structure, forms heterodimers with envelope protein E in the endoplasmic reticulum and Golgi. In terms of assembly, homodimer; in the endoplasmic reticulum and Golgi. Interacts with protein prM. Interacts with non-structural protein 1. Homodimer; Homohexamer when secreted. Interacts with envelope protein E. NS1 interacts with NS4B. Interacts with host complement protein CFH; this interaction leads to the degradation of C3. As to quaternary structure, interacts (via N-terminus) with serine protease NS3. In terms of assembly, forms a heterodimer with serine protease NS3. May form homooligomers. Forms a heterodimer with NS2B. Interacts with non-structural protein 2A (via N-terminus). Interacts with NS4B. Interacts with unphosphorylated RNA-directed RNA polymerase NS5; this interaction stimulates RNA-directed RNA polymerase NS5 guanylyltransferase activity. As to quaternary structure, interacts with serine protease NS3. In terms of assembly, homodimer. Interacts with host STAT2; this interaction inhibits the phosphorylation of the latter, and, when all viral proteins are present (polyprotein), targets STAT2 for degradation. Interacts with serine protease NS3. Post-translationally, specific enzymatic cleavages in vivo yield mature proteins. Cleavages in the lumen of endoplasmic reticulum are performed by host signal peptidase, whereas cleavages in the cytoplasmic side are performed by serine protease NS3. Signal cleavage at the 2K-4B site requires a prior NS3 protease-mediated cleavage at the 4A-2K site. In terms of processing, cleaved in post-Golgi vesicles by a host furin, releasing the mature small envelope protein M, and peptide pr. This cleavage is incomplete as up to 30% of viral particles still carry uncleaved prM. N-glycosylated. Post-translationally, N-glycosylated. The excreted form is glycosylated and this is required for efficient secretion of the protein from infected cells. In terms of processing, phosphorylated on serines residues. This phosphorylation may trigger NS5 nuclear localization.

The protein resides in the virion. Its subcellular location is the host nucleus. The protein localises to the host cytoplasm. It localises to the host perinuclear region. It is found in the secreted. The protein resides in the virion membrane. Its subcellular location is the host endoplasmic reticulum membrane. The enzyme catalyses Selective hydrolysis of -Xaa-Xaa-|-Yaa- bonds in which each of the Xaa can be either Arg or Lys and Yaa can be either Ser or Ala.. It carries out the reaction RNA(n) + a ribonucleoside 5'-triphosphate = RNA(n+1) + diphosphate. It catalyses the reaction a ribonucleoside 5'-triphosphate + H2O = a ribonucleoside 5'-diphosphate + phosphate + H(+). The catalysed reaction is ATP + H2O = ADP + phosphate + H(+). The enzyme catalyses a 5'-end (5'-triphosphoguanosine)-ribonucleoside in mRNA + S-adenosyl-L-methionine = a 5'-end (N(7)-methyl 5'-triphosphoguanosine)-ribonucleoside in mRNA + S-adenosyl-L-homocysteine. It carries out the reaction a 5'-end (N(7)-methyl 5'-triphosphoguanosine)-ribonucleoside in mRNA + S-adenosyl-L-methionine = a 5'-end (N(7)-methyl 5'-triphosphoguanosine)-(2'-O-methyl-ribonucleoside) in mRNA + S-adenosyl-L-homocysteine + H(+). Plays a role in virus budding by binding to the cell membrane and gathering the viral RNA into a nucleocapsid that forms the core of a mature virus particle. During virus entry, may induce genome penetration into the host cytoplasm after hemifusion induced by the surface proteins. Can migrate to the cell nucleus where it modulates host functions. Overcomes the anti-viral effects of host EXOC1 by sequestering and degrading the latter through the proteasome degradation pathway. Functionally, inhibits RNA silencing by interfering with host Dicer. In terms of biological role, prevents premature fusion activity of envelope proteins in trans-Golgi by binding to envelope protein E at pH6.0. After virion release in extracellular space, gets dissociated from E dimers. Its function is as follows. Acts as a chaperone for envelope protein E during intracellular virion assembly by masking and inactivating envelope protein E fusion peptide. prM is the only viral peptide matured by host furin in the trans-Golgi network probably to avoid catastrophic activation of the viral fusion activity in acidic Golgi compartment prior to virion release. prM-E cleavage is inefficient, and many virions are only partially matured. These uncleaved prM would play a role in immune evasion. May play a role in virus budding. Exerts cytotoxic effects by activating a mitochondrial apoptotic pathway through M ectodomain. May display a viroporin activity. Functionally, binds to host cell surface receptor and mediates fusion between viral and cellular membranes. Envelope protein is synthesized in the endoplasmic reticulum in the form of heterodimer with protein prM. They play a role in virion budding in the ER, and the newly formed immature particle is covered with 60 spikes composed of heterodimer between precursor prM and envelope protein E. The virion is transported to the Golgi apparatus where the low pH causes dissociation of PrM-E heterodimers and formation of E homodimers. prM-E cleavage is inefficient, and many virions are only partially matured. These uncleaved prM would play a role in immune evasion. In terms of biological role, involved in immune evasion, pathogenesis and viral replication. Once cleaved off the polyprotein, is targeted to three destinations: the viral replication cycle, the plasma membrane and the extracellular compartment. Essential for viral replication. Required for formation of the replication complex and recruitment of other non-structural proteins to the ER-derived membrane structures. Excreted as a hexameric lipoparticle that plays a role against host immune response. Antagonizing the complement function. Binds to the host macrophages and dendritic cells. Inhibits signal transduction originating from Toll-like receptor 3 (TLR3). Its function is as follows. Component of the viral RNA replication complex that functions in virion assembly and antagonizes the host alpha/beta interferon antiviral response. Required cofactor for the serine protease function of NS3. May have membrane-destabilizing activity and form viroporins. Functionally, displays three enzymatic activities: serine protease, NTPase and RNA helicase. NS3 serine protease, in association with NS2B, performs its autocleavage and cleaves the polyprotein at dibasic sites in the cytoplasm: C-prM, NS2A-NS2B, NS2B-NS3, NS3-NS4A, NS4A-2K and NS4B-NS5. NS3 RNA helicase binds RNA and unwinds dsRNA in the 3' to 5' direction. In terms of biological role, regulates the ATPase activity of the NS3 helicase activity. NS4A allows NS3 helicase to conserve energy during unwinding. Its function is as follows. Functions as a signal peptide for NS4B and is required for the interferon antagonism activity of the latter. Induces the formation of ER-derived membrane vesicles where the viral replication takes place. Inhibits interferon (IFN)-induced host STAT1 phosphorylation and nuclear translocation, thereby preventing the establishment of cellular antiviral state by blocking the IFN-alpha/beta pathway. Inhibits STAT2 translocation in the nucleus after IFN-alpha treatment. Functionally, replicates the viral (+) and (-) RNA genome, and performs the capping of genomes in the cytoplasm. NS5 methylates viral RNA cap at guanine N-7 and ribose 2'-O positions. Besides its role in RNA genome replication, also prevents the establishment of cellular antiviral state by blocking the interferon-alpha/beta (IFN-alpha/beta) signaling pathway. Inhibits host TYK2 and STAT2 phosphorylation, thereby preventing activation of JAK-STAT signaling pathway. The protein is Genome polyprotein of Agelaius tricolor (Tricolored blackbird).